A 96-amino-acid polypeptide reads, in one-letter code: Co-chaperonin GroES (96 aa).

The protein belongs to the GroES chaperonin family. Heptamer of 7 subunits arranged in a ring. Interacts with the chaperonin GroEL.

The protein localises to the cytoplasm. Its function is as follows. Together with the chaperonin GroEL, plays an essential role in assisting protein folding. The GroEL-GroES system forms a nano-cage that allows encapsulation of the non-native substrate proteins and provides a physical environment optimized to promote and accelerate protein folding. GroES binds to the apical surface of the GroEL ring, thereby capping the opening of the GroEL channel. This Caulobacter vibrioides (strain ATCC 19089 / CIP 103742 / CB 15) (Caulobacter crescentus) protein is Co-chaperonin GroES.